The following is a 419-amino-acid chain: MIQTGFGRTSALEGFEQPFDPAQAIDLESPLTSTDTSVENTTRNAGALWPSSQPLSPWERFCRWVTSTENRIYIGWFGMLAIPTLATAAIVFVLAIIAAPAVDMDGTGRMVSGSLLDGNNLITAAVVPTSAAIGLHFYPIWEAASLDEWLINGGPYQLIVLHFIIGIISYQDREWELSYRLKMRPWISLAFTAPVAASVSVLLVYPVGQGGFASGMPLGISGTFTFMMQFQADHNILASPLHQMGVIGVLGGALLCAVHGSLVTSTVCRAPAQTMALTTTKTGTDRQKPKKAKTYSFEHAQAYQQTLLWRGAKFNSSRAVHFCLAALPVAGIWSAAIGVDLAAFDFDRLSFELPSHISVRKTVVPTWSDVVNQANLGIHTVGEKTPPKFSESGFPEFKLSEFVEPIAEDSASTLLSPHS.

A run of 5 helical transmembrane segments spans residues 73–90, 162–177, 186–200, 241–262, and 323–337; these read YIGW…TAAI, HFII…EWEL, WISL…ASVS, LHQM…HGSL, and CLAA…SAAI. His-162 contacts a chlorophyll. An a chlorophyll-binding site is contributed by His-242.

The protein belongs to the reaction center PufL/M/PsbA/D family. In terms of assembly, homodimer.

Its subcellular location is the cellular thylakoid membrane. Synthesizes chlorophyll f or chlorophyllide f (Chl f, 2-formyl chlorophyll a), probably by oxidation of chlorophyll a or chlorophyllide a and reduction of plastoquinone. The reaction is probably light-dependent. Chl f absorbs far red light (FRL, 707 nm in 100% methanol), and is synthesized when cells are grown in FRL, where it provides the advantage of extending the spectral range of harvested light in terrestrial cyanobacteria. Chl f synthesis is probably light-dependent. This Synechococcus sp. (strain ATCC 29403 / PCC 7335) protein is Light-dependent chlorophyll f synthase.